Reading from the N-terminus, the 1134-residue chain is Phospholipid-transporting ATPase IH (1134 aa).

Residues 1–61 (MDCSLVRTLV…SSKYTFWNFI (61 aa)) lie on the Cytoplasmic side of the membrane. Residues 62 to 82 (PKNLFEQFRRVANFYFLIIFL) form a helical membrane-spanning segment. Over 83-88 (VQLIID) the chain is Extracellular. Residues 89–110 (TPTSPVTSGLPLFFVITVTAIK) traverse the membrane as a helical segment. At 111-296 (QGYEDWLRHK…SAVEKSMNAF (186 aa)) the chain is on the cytoplasmic side. The chain crosses the membrane as a helical span at residues 297-318 (LIVYLCILISKALINTVLKYMW). Residues 319-349 (QSEPFRDEPWYNQKTESERQRNLFLKAFTDF) are Extracellular-facing. The helical transmembrane segment at 350 to 372 (LAFMVLFNYIIPVSMYVTVEMQK) threads the bilayer. The Cytoplasmic segment spans residues 373 to 881 (FLGSYFITWD…GHFYYIRISE (509 aa)). Asp414 (4-aspartylphosphate intermediate) is an active-site residue. The ATP site is built by Asp414, Lys415, Thr416, Glu511, Phe553, Lys576, Arg607, Thr687, Gly688, and Asp689. Position 414 (Asp414) interacts with Mg(2+). Thr416 lines the Mg(2+) pocket. Ser738 carries the phosphoserine modification. ATP is bound by residues Arg798 and Lys804. Asp825 is a binding site for Mg(2+). Positions 828 and 829 each coordinate ATP. Asp829 lines the Mg(2+) pocket. Residues 882 to 902 (LVQYFFYKNVCFIFPQFLYQF) form a helical membrane-spanning segment. At 903 to 914 (FCGFSQQTLYDT) the chain is on the extracellular side. Residues 915–934 (AYLTLYNISFTSLPILLYSL) traverse the membrane as a helical segment. At 935-964 (MEQHVGIDVLKRDPTLYRDVAKNALLRWRV) the chain is on the cytoplasmic side. The helical transmembrane segment at 965–986 (FIYWTLLGLFDALVFFFGAYFV) threads the bilayer. Residues 987–1000 (FENTTVTSNGQIFG) lie on the Extracellular side of the membrane. A helical membrane pass occupies residues 1001-1023 (NWTFGTLVFTVMVFTVTLKLALD). The Cytoplasmic portion of the chain corresponds to 1024-1029 (THYWTW). A helical membrane pass occupies residues 1030–1050 (INHFVIWGSLLFYVVFSLLWG). The Extracellular portion of the chain corresponds to 1051 to 1068 (GVIWPFLNYQRMYYVFIQ). Residues 1069-1093 (MLSSGPAWLAIVLLVTISLLPDVLK) form a helical membrane-spanning segment. Residues 1094-1134 (KVLCRQLWPTATERVQTKSQCLSVEQSTIFMLSQTSSSLSF) lie on the Cytoplasmic side of the membrane.

Belongs to the cation transport ATPase (P-type) (TC 3.A.3) family. Type IV subfamily. In terms of assembly, component of a P4-ATPase flippase complex which consists of a catalytic alpha subunit ATP11A and an accessory beta subunit TMEM30A. The cofactor is Mg(2+). Proteolytically cleaved by CASP3. As to expression, widely expressed. Expressed in myoblasts.

The protein resides in the cell membrane. Its subcellular location is the early endosome. The protein localises to the recycling endosome. It localises to the endoplasmic reticulum membrane. The enzyme catalyses ATP + H2O + phospholipidSide 1 = ADP + phosphate + phospholipidSide 2.. It carries out the reaction a 1,2-diacyl-sn-glycero-3-phospho-L-serine(out) + ATP + H2O = a 1,2-diacyl-sn-glycero-3-phospho-L-serine(in) + ADP + phosphate + H(+). The catalysed reaction is a 1,2-diacyl-sn-glycero-3-phosphoethanolamine(out) + ATP + H2O = a 1,2-diacyl-sn-glycero-3-phosphoethanolamine(in) + ADP + phosphate + H(+). The flippase activity is inactivated by caspase-mediated cleavage in apoptotic cells, allowing for PS exposure on the cell surface and engulfment of apoptotic cells by macrophages. The ATPase activity is up-regulated by aminophospholipids PS and PE and down-regulated by increasing intracellular Ca2+ levels. Its function is as follows. Catalytic component of a P4-ATPase flippase complex which catalyzes the hydrolysis of ATP coupled to the transport of aminophospholipids, phosphatidylserines (PS) and phosphatidylethanolamines (PE), from the outer to the inner leaflet of the plasma membrane. Does not show flippase activity toward phosphatidylcholine (PC). Contributes to the maintenance of membrane lipid asymmetry with a specific role in morphogenesis of muscle cells. In myoblasts, mediates PS enrichment at the inner leaflet of plasma membrane, triggering PIEZO1-dependent Ca2+ influx and Rho GTPases signal transduction, subsequently leading to the assembly of cortical actomyosin fibers and myotube formation. May be involved in the uptake of farnesyltransferase inhibitor drugs, such as lonafarnib. This chain is Phospholipid-transporting ATPase IH (ATP11A), found in Homo sapiens (Human).